Reading from the N-terminus, the 340-residue chain is DNA-directed RNA polymerase subunit alpha (340 aa).

An alpha N-terminal domain (alpha-NTD) region spans residues methionine 1–asparagine 226. The interval leucine 243 to tyrosine 340 is alpha C-terminal domain (alpha-CTD).

The protein belongs to the RNA polymerase alpha chain family. As to quaternary structure, homodimer. The RNAP catalytic core consists of 2 alpha, 1 beta, 1 beta' and 1 omega subunit. When a sigma factor is associated with the core the holoenzyme is formed, which can initiate transcription. In terms of processing, the last 19 amino acids in the C-terminal part are cleaved in the spore.

It catalyses the reaction RNA(n) + a ribonucleoside 5'-triphosphate = RNA(n+1) + diphosphate. Functionally, DNA-dependent RNA polymerase catalyzes the transcription of DNA into RNA using the four ribonucleoside triphosphates as substrates. This is DNA-directed RNA polymerase subunit alpha from Streptomyces granaticolor.